The following is a 414-amino-acid chain: Transmembrane protein 184A (414 aa).

The tract at residues 1 to 32 (MTDTPGLLGTPLAWTPPARPAGPQMERAGNGS) is disordered. Helical transmembrane passes span 48–68 (VSGV…YLHL), 83–103 (LLFI…LLGG), 120–140 (FVIY…SAIM), 177–197 (LQFC…QAFG), 211–231 (LYIT…LFLF), 248–268 (FLTI…LAIL), and 290–310 (VAAG…SIAL). Disordered regions lie at residues 323 to 342 (TESS…GLKE) and 364 to 414 (YTQQ…AEEL). A compositionally biased stretch (polar residues) spans 379–388 (SVPSPRTPTH).

The protein belongs to the TMEM184 family. Expressed in vascular cells (at protein level).

The protein resides in the cell membrane. The protein localises to the cytoplasm. It localises to the perinuclear region. It is found in the cytoplasmic vesicle membrane. Its subcellular location is the early endosome membrane. The protein resides in the endosome. The protein localises to the cytoplasmic vesicle. It localises to the secretory vesicle membrane. Functionally, acts as a heparin receptor in vascular cells. May be involved in vesicle transport in exocrine cells and Sertoli cells. This is Transmembrane protein 184A (TMEM184A) from Bos taurus (Bovine).